A 117-amino-acid polypeptide reads, in one-letter code: Large-conductance mechanosensitive channel (117 aa).

The next 3 helical transmembrane spans lie at 7–27 (EFALKGNVLDLAIAVVMGAAF), 30–50 (IVTSLVTYIIMPLIGKIFGSV), and 64–84 (GLFIQSIIDFIIVAIALFIFV).

This sequence belongs to the MscL family. As to quaternary structure, homopentamer.

Its subcellular location is the cell membrane. In terms of biological role, channel that opens in response to stretch forces in the membrane lipid bilayer. May participate in the regulation of osmotic pressure changes within the cell. This is Large-conductance mechanosensitive channel from Staphylococcus haemolyticus (strain JCSC1435).